Reading from the N-terminus, the 279-residue chain is Acetyl-coenzyme A carboxylase carboxyl transferase subunit beta (279 aa).

Positions 27–279 (LFLACPYCGT…IVKLHHRTEI (253 aa)) constitute a CoA carboxyltransferase N-terminal domain. Positions 31, 34, 49, and 52 each coordinate Zn(2+). The segment at 31 to 52 (CPYCGTQMYNKQLGDYRVCAKC) adopts a C4-type zinc-finger fold.

The protein belongs to the AccD/PCCB family. Acetyl-CoA carboxylase is a heterohexamer composed of biotin carboxyl carrier protein (AccB), biotin carboxylase (AccC) and two subunits each of ACCase subunit alpha (AccA) and ACCase subunit beta (AccD). Zn(2+) is required as a cofactor.

The protein localises to the cytoplasm. It catalyses the reaction N(6)-carboxybiotinyl-L-lysyl-[protein] + acetyl-CoA = N(6)-biotinyl-L-lysyl-[protein] + malonyl-CoA. The protein operates within lipid metabolism; malonyl-CoA biosynthesis; malonyl-CoA from acetyl-CoA: step 1/1. In terms of biological role, component of the acetyl coenzyme A carboxylase (ACC) complex. Biotin carboxylase (BC) catalyzes the carboxylation of biotin on its carrier protein (BCCP) and then the CO(2) group is transferred by the transcarboxylase to acetyl-CoA to form malonyl-CoA. The polypeptide is Acetyl-coenzyme A carboxylase carboxyl transferase subunit beta (Leuconostoc citreum (strain KM20)).